The primary structure comprises 74 residues: Conotoxin VxVIA (74 aa).

The N-terminal stretch at 1–22 (MKLTCVLIIAVLFLTAYQLATA) is a signal peptide. The propeptide occupies 23-47 (ASHAKGKQKHRALRPADKHFRFTKR). 3 cysteine pairs are disulfide-bonded: Cys48/Cys62, Cys55/Cys66, and Cys61/Cys73.

As to expression, expressed by the venom duct.

It is found in the secreted. Functionally, when injected intracranially in mice, induces a series of symptoms such as quivering, climbing, scratching, barrel rolling and paralysis of limbs. Unexpectedly, no effect is observed on ionic currents when tested on locust DUM neuron. The chain is Conotoxin VxVIA from Conus vexillum (Flag cone).